Here is a 177-residue protein sequence, read N- to C-terminus: Interleukin-1 receptor antagonist protein (177 aa).

A signal peptide spans 1–25; that stretch reads MEIRRRSVRHLISLLLFLFYSETAC. Cys91 and Cys141 are disulfide-bonded. An N-linked (GlcNAc...) asparagine glycan is attached at Asn109.

Belongs to the IL-1 family.

It is found in the secreted. In terms of biological role, anti-inflammatory antagonist of interleukin-1 family of proinflammatory cytokines such as interleukin-1beta/IL1B and interleukin-1alpha/IL1A. Protects from immune dysregulation and uncontrolled systemic inflammation triggered by IL1 for a range of innate stimulatory agents such as pathogens. The polypeptide is Interleukin-1 receptor antagonist protein (IL1RN) (Equus caballus (Horse)).